Consider the following 342-residue polypeptide: Adenylate isopentenyltransferase 6, chloroplastic (342 aa).

The N-terminal 33 residues, 1 to 33 (MQQLMTLLSPPLSHSSLLPTVTTKFGSPRLVTT), are a transit peptide targeting the chloroplast. ATP is bound at residue 52–59 (GTTGTGKS).

It belongs to the IPP transferase family. Expressed in siliques, at the mRNA level.

The protein localises to the plastid. Its subcellular location is the chloroplast. It catalyses the reaction dimethylallyl diphosphate + ADP = N(6)-(dimethylallyl)adenosine 5'-diphosphate + diphosphate. The enzyme catalyses dimethylallyl diphosphate + ATP = N(6)-(dimethylallyl)adenosine 5'-triphosphate + diphosphate. Involved in cytokinin biosynthesis. Catalyzes the transfer of an isopentenyl group from dimethylallyl diphosphate (DMAPP) to ATP and ADP. This Arabidopsis thaliana (Mouse-ear cress) protein is Adenylate isopentenyltransferase 6, chloroplastic (IPT6).